A 1045-amino-acid polypeptide reads, in one-letter code: Elongation factor 3 (1045 aa).

HEAT repeat units follow at residues Asp-5–Ile-42, Glu-43–Glu-85, Pro-86–Pro-123, Ala-125–Glu-162, Leu-166–Asn-203, Asp-205–Pro-241, and Ala-242–Asp-279. Residues Ile-42, His-44, and Ser-83 each contribute to the ADP site. 3 residues coordinate ADP: Thr-392, His-396, and Glu-397. 2 ABC transporter domains span residues Asp-426–Leu-641 and Val-667–Asp-993. The ADP site is built by Asn-703, Glu-922, Asn-925, and His-951. Residues Ser-974–Phe-1045 are disordered. The segment covering Gly-1007–Lys-1031 has biased composition (basic residues).

This sequence belongs to the ABC transporter superfamily. ABCF family. EF3 subfamily. In terms of assembly, monomer.

It localises to the cytoplasm. Its subcellular location is the cytosol. It catalyses the reaction ATP + H2O = ADP + phosphate + H(+). It functions in the pathway protein biosynthesis; polypeptide chain elongation. Ribosome-dependent ATPase that functions in cytoplasmic translation elongation. Required for the ATP-dependent release of deacylated tRNA from the ribosomal E-site during protein biosynthesis. Stimulates the eEF1A-dependent binding of aminoacyl-tRNA to the ribosomal A-site, which has reduced affinity for tRNA as long as the E-site is occupied. Assists translation termination by stimulating the release of nascent protein from the ribosome by release factors. The chain is Elongation factor 3 (TEF3) from Candida glabrata (strain ATCC 2001 / BCRC 20586 / JCM 3761 / NBRC 0622 / NRRL Y-65 / CBS 138) (Yeast).